Consider the following 83-residue polypeptide: uncharacterized protein (83 aa).

This sequence belongs to the chlamydial CPn_0710/CT_666/TC_0037 family.

This is an uncharacterized protein from Chlamydia trachomatis serovar D (strain ATCC VR-885 / DSM 19411 / UW-3/Cx).